A 598-amino-acid polypeptide reads, in one-letter code: 4-coumarate--CoA ligase-like 6 (598 aa).

Residues serine 232, serine 233, glycine 234, threonine 235, threonine 236, and lysine 240 each coordinate ATP. Arginine 318 serves as a coordination point for CoA. The SBD1 stretch occupies residues 320–389 (DLAAAARAVE…TVFPSVQIVQ (70 aa)). Glycine 367, glutamine 389, and threonine 394 together coordinate (E)-4-coumaroyl-AMP. Residues glutamine 389, threonine 394, aspartate 475, and arginine 490 each coordinate ATP. An SBD2 region spans residues 390 to 454 (SYGLTESTGP…IRGPVVMKGY (65 aa)). Residues lysine 492 and lysine 496 each coordinate (E)-4-coumaroyl-AMP. CoA-binding residues include lysine 498 and glycine 499. Residue lysine 581 coordinates ATP.

This sequence belongs to the ATP-dependent AMP-binding enzyme family. It depends on Mg(2+) as a cofactor.

It catalyses the reaction (E)-4-coumarate + ATP + CoA = (E)-4-coumaroyl-CoA + AMP + diphosphate. The enzyme catalyses (E)-4-coumarate + ATP + H(+) = (E)-4-coumaroyl-AMP + diphosphate. The catalysed reaction is (E)-4-coumaroyl-AMP + CoA = (E)-4-coumaroyl-CoA + AMP + H(+). Carboxylate--CoA ligase that may use 4-coumarate as substrate. Follows a two-step reaction mechanism, wherein the carboxylate substrate first undergoes adenylation by ATP, followed by a thioesterification in the presence of CoA to yield the final CoA thioester. The sequence is that of 4-coumarate--CoA ligase-like 6 (4CLL6) from Oryza sativa subsp. japonica (Rice).